The following is a 179-amino-acid chain: Large ribosomal subunit protein uL6 (179 aa).

Belongs to the universal ribosomal protein uL6 family. In terms of assembly, part of the 50S ribosomal subunit.

Its function is as follows. This protein binds to the 23S rRNA, and is important in its secondary structure. It is located near the subunit interface in the base of the L7/L12 stalk, and near the tRNA binding site of the peptidyltransferase center. In Saccharopolyspora erythraea (strain ATCC 11635 / DSM 40517 / JCM 4748 / NBRC 13426 / NCIMB 8594 / NRRL 2338), this protein is Large ribosomal subunit protein uL6.